The sequence spans 250 residues: Bcl-2-like protein 12 (250 aa).

Residues glycine 24 to phenylalanine 46 are disordered. Residue serine 29 is modified to Phosphoserine. The residue at position 33 (threonine 33) is a Phosphothreonine. Serine 37 is subject to Phosphoserine. An Omega-N-methylarginine modification is found at arginine 60. A phosphoserine mark is found at serine 111, serine 158, serine 159, serine 161, and serine 189. Residues tryptophan 227–leucine 238 carry the BH2 motif.

It belongs to the Bcl-2 family. Expressed mainly in breast, thymus, prostate, fetal liver, colon, placenta, pancreas, small intestine, spinal cord, kidney, and bone marrow and to a lesser extent in many other tissues. Isoform 2 is primarily expressed in skeletal muscle.

This Homo sapiens (Human) protein is Bcl-2-like protein 12.